Reading from the N-terminus, the 426-residue chain is Phosphomethylpyrimidine synthase (426 aa).

Residues Asn65, Met94, Tyr123, His162, 184 to 186, 225 to 228, and Glu264 contribute to the substrate site; these read SRG and DGMR. Residue His268 participates in Zn(2+) binding. Tyr291 is a substrate binding site. Residue His332 participates in Zn(2+) binding. [4Fe-4S] cluster-binding residues include Cys408, Cys411, and Cys415.

The protein belongs to the ThiC family. Requires [4Fe-4S] cluster as cofactor.

The catalysed reaction is 5-amino-1-(5-phospho-beta-D-ribosyl)imidazole + S-adenosyl-L-methionine = 4-amino-2-methyl-5-(phosphooxymethyl)pyrimidine + CO + 5'-deoxyadenosine + formate + L-methionine + 3 H(+). It functions in the pathway cofactor biosynthesis; thiamine diphosphate biosynthesis. In terms of biological role, catalyzes the synthesis of the hydroxymethylpyrimidine phosphate (HMP-P) moiety of thiamine from aminoimidazole ribotide (AIR) in a radical S-adenosyl-L-methionine (SAM)-dependent reaction. The polypeptide is Phosphomethylpyrimidine synthase (Methanococcus vannielii (strain ATCC 35089 / DSM 1224 / JCM 13029 / OCM 148 / SB)).